A 682-amino-acid polypeptide reads, in one-letter code: Potassium-transporting ATPase ATP-binding subunit (682 aa).

A run of 4 helical transmembrane segments spans residues Pro34–Ala54, Ala62–Ala82, Ile219–Leu239, and Val254–Ile274. Asp307 serves as the catalytic 4-aspartylphosphate intermediate. ATP contacts are provided by residues Asp344, Glu348, Phe377–Ser384, and Lys395. Mg(2+)-binding residues include Asp518 and Asp522. Transmembrane regions (helical) follow at residues Phe588–Met608, Ala616–Leu636, and Leu662–Val682.

This sequence belongs to the cation transport ATPase (P-type) (TC 3.A.3) family. Type IA subfamily. As to quaternary structure, the system is composed of three essential subunits: KdpA, KdpB and KdpC.

The protein localises to the cell inner membrane. It catalyses the reaction K(+)(out) + ATP + H2O = K(+)(in) + ADP + phosphate + H(+). Its function is as follows. Part of the high-affinity ATP-driven potassium transport (or Kdp) system, which catalyzes the hydrolysis of ATP coupled with the electrogenic transport of potassium into the cytoplasm. This subunit is responsible for energy coupling to the transport system and for the release of the potassium ions to the cytoplasm. The chain is Potassium-transporting ATPase ATP-binding subunit from Enterobacter sp. (strain 638).